Consider the following 144-residue polypeptide: Large ribosomal subunit protein uL16 (144 aa).

The protein belongs to the universal ribosomal protein uL16 family. In terms of assembly, part of the 50S ribosomal subunit.

Its function is as follows. Binds 23S rRNA and is also seen to make contacts with the A and possibly P site tRNAs. The chain is Large ribosomal subunit protein uL16 from Thermoanaerobacter sp. (strain X514).